A 258-amino-acid polypeptide reads, in one-letter code: Transcription factor RSL3 (258 aa).

Residues 98-105 carry the D-box motif; the sequence is RKLLDVEN. Positions 119-178 are disordered; sequence ELAKSKKKQRVSSESNTVDESNTNWVDGQSLSNSSDDEKASVTSVKGKTRATKGTATDPQ. The segment covering 130–152 has biased composition (polar residues); sequence SSESNTVDESNTNWVDGQSLSNS. Positions 173–186 are basic motif; that stretch reads TATDPQSLYARKRR. The 50-residue stretch at 173–222 folds into the bHLH domain; that stretch reads TATDPQSLYARKRREKINERLKTLQNLVPNGTKVDISTMLEEAVHYVKFL. Residues 187 to 222 form a helix-loop-helix motif region; that stretch reads EKINERLKTLQNLVPNGTKVDISTMLEEAVHYVKFL.

As to quaternary structure, homodimer. In terms of processing, ubiquitinated. Ubiquitination leads to its subsequent degradation by the 26S proteasome. In terms of tissue distribution, expressed constitutively in roots, leaves, and flowers. Expressed in root epidermal hair cells.

Its subcellular location is the nucleus. Functionally, transcription factor involved in the regulation of root hair elongation. Is sufficient to promote postmitotic cell growth in root-hair cells and is a direct transcriptional target of RHD6 and RSL1. Involved in the regulation of root hair elongation in response to low phosphate. Controls root hair cell growth by regulating the expression of genes encoding proteins involved in cell signaling, cell wall modification and secretion. The chain is Transcription factor RSL3 from Arabidopsis thaliana (Mouse-ear cress).